Consider the following 295-residue polypeptide: GTPase Era (295 aa).

Positions 3 to 171 constitute an Era-type G domain; sequence KSGFITVIGR…LELMKKYLPE (169 aa). The interval 11–18 is G1; the sequence is GRPNVGKS. GTP is bound at residue 11–18; the sequence is GRPNVGKS. A G2 region spans residues 37-41; the sequence is QTTRN. Residues 58–61 form a G3 region; sequence DTPG. Residues 58–62 and 120–123 contribute to the GTP site; these read DTPGM and NKID. Residues 120 to 123 are G4; sequence NKID. The interval 150-152 is G5; that stretch reads ISA. In terms of domain architecture, KH type-2 spans 202-279; sequence LSEEVPHGIA…SLKVWVKVKK (78 aa).

It belongs to the TRAFAC class TrmE-Era-EngA-EngB-Septin-like GTPase superfamily. Era GTPase family. As to quaternary structure, monomer.

Its subcellular location is the cytoplasm. The protein localises to the cell membrane. In terms of biological role, an essential GTPase that binds both GDP and GTP, with rapid nucleotide exchange. Plays a role in 16S rRNA processing and 30S ribosomal subunit biogenesis and possibly also in cell cycle regulation and energy metabolism. This Clostridium tetani (strain Massachusetts / E88) protein is GTPase Era.